The sequence spans 370 residues: Glutamine synthetase (370 aa).

Ala2 is modified (N-acetylalanine). Ser5 is modified (phosphoserine). Residues 24–103 form the GS beta-grasp domain; that stretch reads IIAEYVWIDG…VLAACYNNDG (80 aa). The region spanning 110 to 370 is the GS catalytic domain; sequence HRHEAAKLFA…MTKEFERESS (261 aa). Glycyl lysine isopeptide (Lys-Gly) (interchain with G-Cter in ubiquitin) cross-links involve residues Lys283, Lys324, and Lys363.

The protein belongs to the glutamine synthetase family. As to quaternary structure, homooctamer.

The protein localises to the cytoplasm. The catalysed reaction is L-glutamate + NH4(+) + ATP = L-glutamine + ADP + phosphate + H(+). In Saccharomyces cerevisiae (strain ATCC 204508 / S288c) (Baker's yeast), this protein is Glutamine synthetase (GLN1).